A 557-amino-acid polypeptide reads, in one-letter code: Dihydroxy-acid dehydratase (557 aa).

Residue C50 participates in [2Fe-2S] cluster binding. Mg(2+) is bound at residue D82. C123 contacts [2Fe-2S] cluster. Residues D124 and K125 each coordinate Mg(2+). K125 carries the post-translational modification N6-carboxylysine. C195 is a binding site for [2Fe-2S] cluster. Residue E447 participates in Mg(2+) binding. S473 functions as the Proton acceptor in the catalytic mechanism.

Belongs to the IlvD/Edd family. Homodimer. [2Fe-2S] cluster serves as cofactor. Mg(2+) is required as a cofactor.

It catalyses the reaction (2R)-2,3-dihydroxy-3-methylbutanoate = 3-methyl-2-oxobutanoate + H2O. It carries out the reaction (2R,3R)-2,3-dihydroxy-3-methylpentanoate = (S)-3-methyl-2-oxopentanoate + H2O. Its pathway is amino-acid biosynthesis; L-isoleucine biosynthesis; L-isoleucine from 2-oxobutanoate: step 3/4. It participates in amino-acid biosynthesis; L-valine biosynthesis; L-valine from pyruvate: step 3/4. Its function is as follows. Functions in the biosynthesis of branched-chain amino acids. Catalyzes the dehydration of (2R,3R)-2,3-dihydroxy-3-methylpentanoate (2,3-dihydroxy-3-methylvalerate) into 2-oxo-3-methylpentanoate (2-oxo-3-methylvalerate) and of (2R)-2,3-dihydroxy-3-methylbutanoate (2,3-dihydroxyisovalerate) into 2-oxo-3-methylbutanoate (2-oxoisovalerate), the penultimate precursor to L-isoleucine and L-valine, respectively. This is Dihydroxy-acid dehydratase from Nitrosospira multiformis (strain ATCC 25196 / NCIMB 11849 / C 71).